We begin with the raw amino-acid sequence, 197 residues long: Pyridoxal 5'-phosphate synthase subunit PdxT (197 aa).

An L-glutamine-binding site is contributed by 52–54; sequence GES. Catalysis depends on C83, which acts as the Nucleophile. L-glutamine is bound by residues R115 and 142 to 143; that span reads IR. Residues H178 and E180 each act as charge relay system in the active site.

It belongs to the glutaminase PdxT/SNO family. As to quaternary structure, in the presence of PdxS, forms a dodecamer of heterodimers. Only shows activity in the heterodimer.

It carries out the reaction aldehydo-D-ribose 5-phosphate + D-glyceraldehyde 3-phosphate + L-glutamine = pyridoxal 5'-phosphate + L-glutamate + phosphate + 3 H2O + H(+). The enzyme catalyses L-glutamine + H2O = L-glutamate + NH4(+). Its pathway is cofactor biosynthesis; pyridoxal 5'-phosphate biosynthesis. In terms of biological role, catalyzes the hydrolysis of glutamine to glutamate and ammonia as part of the biosynthesis of pyridoxal 5'-phosphate. The resulting ammonia molecule is channeled to the active site of PdxS. In Korarchaeum cryptofilum (strain OPF8), this protein is Pyridoxal 5'-phosphate synthase subunit PdxT.